Reading from the N-terminus, the 248-residue chain is PF03932 family protein CutC (248 aa).

This sequence belongs to the CutC family.

It localises to the cytoplasm. This is PF03932 family protein CutC from Porphyromonas gingivalis (strain ATCC BAA-308 / W83).